Here is a 445-residue protein sequence, read N- to C-terminus: MAAQVASGVGNLNLNSEGGAAAKNISAQGSPENEARESDGEYDDDQGAPELGNTTAAKKKKKKTKKKKKGTSKVQTEPPRVILSSLFPNNQYPEGEIIEYQNENAYRTTNEEKRHLDRMNNDFLAEYRYAAEVHRQVRQYSQKAIKPGQTLTEIAEGIEESVRALTGHPGLEEGDNLRGGIAFPTGVNLNHCAAHYTPNAGNKMVLQYEDVMKVDFGVHINGRIVDSAFTIAFDPVYDNLLAAVKDATNTGIKQAGIDVRMSDIGAAIQEAMESYEVEIKGTSYPVKAIRNLNGHTIGRYEIHGGKNGKSVPIVKGGDQTKMEEGEVYAIETFGSTGRGYVRDDMETSHYAKIPDAPNVPLRLSSAKNLLNVITKNFGTLPFCRRYLDRLGQDKYLLGLNNLVANGIVDAYPPLCDVKGSYTAQFEHTILLRPNVKEVISRGDDY.

The tract at residues 1-80 (MAAQVASGVG…TSKVQTEPPR (80 aa)) is disordered. The span at 57–71 (AKKKKKKTKKKKKGT) shows a compositional bias: basic residues. Histidine 195 provides a ligand contact to substrate. A divalent metal cation is bound by residues aspartate 215, aspartate 226, and histidine 295. Position 303 (histidine 303) interacts with substrate. Residues glutamate 331 and glutamate 426 each contribute to the a divalent metal cation site.

The protein belongs to the peptidase M24A family. Methionine aminopeptidase eukaryotic type 2 subfamily. The cofactor is Co(2+). Zn(2+) is required as a cofactor. It depends on Mn(2+) as a cofactor. Fe(2+) serves as cofactor.

Its subcellular location is the cytoplasm. The enzyme catalyses Release of N-terminal amino acids, preferentially methionine, from peptides and arylamides.. In terms of biological role, cotranslationally removes the N-terminal methionine from nascent proteins. The N-terminal methionine is often cleaved when the second residue in the primary sequence is small and uncharged (Met-Ala-, Cys, Gly, Pro, Ser, Thr, or Val). The chain is Methionine aminopeptidase 2 from Paracoccidioides brasiliensis (strain Pb03).